A 490-amino-acid chain; its full sequence is RNA-binding protein P (490 aa).

The segment at 1–112 (MGKKRKLDSK…EEEEAAERDA (112 aa)) is disordered. Residues 13–36 (AAARSAAARAAAAAAAAAAAAAVA) show a composition bias toward low complexity. The segment covering 74–108 (GGEEEEVEEVEVEEEVEVDEDEDGEGEGEEEEEAA) has biased composition (acidic residues). RRM domains lie at 156–233 (RKIF…LASV) and 267–343 (RKIF…QKAI).

Forms homodimers. Interacts with RBP-L and RBP-208. Interacts with NSF.

It localises to the nucleus. It is found in the cytoplasm. Its function is as follows. RNA-binding protein that binds to a cis-localization element or zipcode, within the 5'-CDS of prolamine RNA. Binds strongly to glutelin mRNA, particularly to 3'-UTR and zipcode RNA. Recognizes and binds to glutelin zipcode RNA, which is required for proper mRNA localization to cisternal endoplasmic reticulum. Exhibits strong binding activity to a glutelin intron sequence and may participate in mRNA splicing. Required for the correct localization of glutelin and prolamine mRNA in endosperm cells during grain development. RBP-P and RBP-L form a quaternary complex with the membrane trafficking factors NSF and RAB5A. This quaternay complex carries glutelin mRNAs for active transport on endosomes to the cortical endoplasmic reticulum membrane, and enables endosome-mediated glutelin mRNA transport in endosperm cells. The chain is RNA-binding protein P from Oryza sativa subsp. japonica (Rice).